We begin with the raw amino-acid sequence, 210 residues long: MPQWDLYVVITTKLGGGRPTLELVRGALAGGATAIQLREKELPARELVELGRAIRELTRDAGATFIVNDRLDIALAVEADGLHIGQEDLPAPVARKLLGPEKILGVSAGTTDEARQAEVDGADYLGVGSIFATGSKGDAGSPIGLEGLRAIRAAVKIPIVGIGGINPDNAAGVIAAGADGVSVISAVIGAADVAAAARRLREVVTRARGK.

4-amino-2-methyl-5-(diphosphooxymethyl)pyrimidine contacts are provided by residues 36 to 40 (QLREK) and N68. Residues D69 and D88 each coordinate Mg(2+). Residue S107 participates in 4-amino-2-methyl-5-(diphosphooxymethyl)pyrimidine binding. 133 to 135 (TGS) provides a ligand contact to 2-[(2R,5Z)-2-carboxy-4-methylthiazol-5(2H)-ylidene]ethyl phosphate. K136 provides a ligand contact to 4-amino-2-methyl-5-(diphosphooxymethyl)pyrimidine. 2-[(2R,5Z)-2-carboxy-4-methylthiazol-5(2H)-ylidene]ethyl phosphate-binding positions include G164 and 184-185 (IS).

Belongs to the thiamine-phosphate synthase family. The cofactor is Mg(2+).

The enzyme catalyses 2-[(2R,5Z)-2-carboxy-4-methylthiazol-5(2H)-ylidene]ethyl phosphate + 4-amino-2-methyl-5-(diphosphooxymethyl)pyrimidine + 2 H(+) = thiamine phosphate + CO2 + diphosphate. It carries out the reaction 2-(2-carboxy-4-methylthiazol-5-yl)ethyl phosphate + 4-amino-2-methyl-5-(diphosphooxymethyl)pyrimidine + 2 H(+) = thiamine phosphate + CO2 + diphosphate. It catalyses the reaction 4-methyl-5-(2-phosphooxyethyl)-thiazole + 4-amino-2-methyl-5-(diphosphooxymethyl)pyrimidine + H(+) = thiamine phosphate + diphosphate. It participates in cofactor biosynthesis; thiamine diphosphate biosynthesis; thiamine phosphate from 4-amino-2-methyl-5-diphosphomethylpyrimidine and 4-methyl-5-(2-phosphoethyl)-thiazole: step 1/1. Its function is as follows. Condenses 4-methyl-5-(beta-hydroxyethyl)thiazole monophosphate (THZ-P) and 2-methyl-4-amino-5-hydroxymethyl pyrimidine pyrophosphate (HMP-PP) to form thiamine monophosphate (TMP). The sequence is that of Thiamine-phosphate synthase from Moorella thermoacetica (strain ATCC 39073 / JCM 9320).